Reading from the N-terminus, the 585-residue chain is Adenine deaminase (585 aa).

The protein belongs to the metallo-dependent hydrolases superfamily. Adenine deaminase family. Requires Mn(2+) as cofactor.

The catalysed reaction is adenine + H2O + H(+) = hypoxanthine + NH4(+). The chain is Adenine deaminase from Halalkalibacterium halodurans (strain ATCC BAA-125 / DSM 18197 / FERM 7344 / JCM 9153 / C-125) (Bacillus halodurans).